The primary structure comprises 139 residues: GSK3B-interacting protein (139 aa).

Positions 1–22 (METDCNPMELSSMSGFEEGSEL) are disordered. A required for PRKAR2A interaction; contributes to a protective effect against H(2)O(2)-induced apoptosis region spans residues 41–45 (VNDVL). Positions 115–139 (SPAYREAFGNALLQRLEALKRDGQS) are interaction with GSK3B and acts as a GSK3B inhibitor.

The protein belongs to the GSKIP family. As to quaternary structure, forms a complex composed of PRKAR2A or PRKAR2B, GSK3B and GSKIP through GSKIP interaction; facilitates PKA-induced phosphorylation of GSK3B leading to GSK3B inactivation; recruits DNM1L through GSK3B for PKA-mediated phosphorylation of DNM1L; promotes beta-catenin degradation through GSK3B-induced phosphorylation of beta-catenin; stabilizes beta-catenin and enhances Wnt-induced signaling through PKA-induced phosphorylation of beta-catenin. Interacts with GSK3B; induces GSK3B-mediated phosphorylation of GSKIP and inhibits GSK3B kinase activity. Phosphorylated by GSK3B. As to expression, detected in heart, brain, placenta, liver, skeletal muscle, kidney, testis, lung and pancreas.

Its subcellular location is the cytoplasm. It is found in the nucleus. Its function is as follows. A-kinase anchoring protein for GSK3B and PKA that regulates or facilitates their kinase activity towards their targets. The ternary complex enhances Wnt-induced signaling by facilitating the GSK3B- and PKA-induced phosphorylation of beta-catenin leading to beta-catenin degradation and stabilization respectively. Upon cAMP activation, the ternary complex contributes to neuroprotection against oxidative stress-induced apoptosis by facilitating the PKA-induced phosphorylation of DML1 and PKA-induced inactivation of GSK3B. During neurite outgrowth promotes neuron proliferation; while increases beta-catenin-induced transcriptional activity through GSK3B kinase activity inhibition, reduces N-cadherin level to promote cell cycle progression. This chain is GSK3B-interacting protein, found in Homo sapiens (Human).